The primary structure comprises 29 residues: Cytochrome b6-f complex subunit 8 (29 aa).

Residues 3–23 (IVSLAWAALMIVFTFSLSLVV) form a helical membrane-spanning segment.

This sequence belongs to the PetN family. The 4 large subunits of the cytochrome b6-f complex are cytochrome b6, subunit IV (17 kDa polypeptide, PetD), cytochrome f and the Rieske protein, while the 4 small subunits are PetG, PetL, PetM and PetN. The complex functions as a dimer.

The protein localises to the plastid membrane. Its function is as follows. Component of the cytochrome b6-f complex, which mediates electron transfer between photosystem II (PSII) and photosystem I (PSI), cyclic electron flow around PSI, and state transitions. The sequence is that of Cytochrome b6-f complex subunit 8 from Cuscuta exaltata (Tall dodder).